We begin with the raw amino-acid sequence, 422 residues long: Protein phosphatase 1 regulatory subunit 36 (422 aa).

In terms of assembly, interacts with PPP1CA.

In terms of biological role, inhibits phosphatase activity of protein phosphatase 1 (PP1) complexes. The chain is Protein phosphatase 1 regulatory subunit 36 (PPP1R36) from Homo sapiens (Human).